Reading from the N-terminus, the 215-residue chain is 3-dehydroquinate dehydratase (215 aa).

Residues 27–29 and Arg-54 contribute to the 3-dehydroquinate site; that span reads EVR. The active-site Proton donor/acceptor is His-112. Lys-139 acts as the Schiff-base intermediate with substrate in catalysis. Positions 176 and 198 each coordinate 3-dehydroquinate.

The protein belongs to the type-I 3-dehydroquinase family. As to quaternary structure, homodimer.

The catalysed reaction is 3-dehydroquinate = 3-dehydroshikimate + H2O. It participates in metabolic intermediate biosynthesis; chorismate biosynthesis; chorismate from D-erythrose 4-phosphate and phosphoenolpyruvate: step 3/7. Involved in the third step of the chorismate pathway, which leads to the biosynthesis of aromatic amino acids. Catalyzes the cis-dehydration of 3-dehydroquinate (DHQ) and introduces the first double bond of the aromatic ring to yield 3-dehydroshikimate. This chain is 3-dehydroquinate dehydratase, found in Thermococcus onnurineus (strain NA1).